The primary structure comprises 476 residues: Bifunctional protein HldE (476 aa).

Positions 1–318 (MKPILPDYSQ…AEAIHGSQDT (318 aa)) are ribokinase. ATP is bound at residue 195-198 (NMAE). Aspartate 264 is a catalytic residue. The cytidylyltransferase stretch occupies residues 344 to 476 (MTNGCFDILH…IIKAIKGGRG (133 aa)).

This sequence in the N-terminal section; belongs to the carbohydrate kinase PfkB family. It in the C-terminal section; belongs to the cytidylyltransferase family. Homodimer.

It catalyses the reaction D-glycero-beta-D-manno-heptose 7-phosphate + ATP = D-glycero-beta-D-manno-heptose 1,7-bisphosphate + ADP + H(+). The catalysed reaction is D-glycero-beta-D-manno-heptose 1-phosphate + ATP + H(+) = ADP-D-glycero-beta-D-manno-heptose + diphosphate. The protein operates within nucleotide-sugar biosynthesis; ADP-L-glycero-beta-D-manno-heptose biosynthesis; ADP-L-glycero-beta-D-manno-heptose from D-glycero-beta-D-manno-heptose 7-phosphate: step 1/4. Its pathway is nucleotide-sugar biosynthesis; ADP-L-glycero-beta-D-manno-heptose biosynthesis; ADP-L-glycero-beta-D-manno-heptose from D-glycero-beta-D-manno-heptose 7-phosphate: step 3/4. Functionally, catalyzes the phosphorylation of D-glycero-D-manno-heptose 7-phosphate at the C-1 position to selectively form D-glycero-beta-D-manno-heptose-1,7-bisphosphate. Its function is as follows. Catalyzes the ADP transfer from ATP to D-glycero-beta-D-manno-heptose 1-phosphate, yielding ADP-D-glycero-beta-D-manno-heptose. The polypeptide is Bifunctional protein HldE (Vibrio atlanticus (strain LGP32) (Vibrio splendidus (strain Mel32))).